The chain runs to 163 residues: Calcium-binding protein 2 (163 aa).

The N-myristoyl glycine moiety is linked to residue glycine 2. EF-hand domains lie at 21-56 (EEIE…LGYM), 72-89 (GKVD…KLLA), 95-130 (IGVR…LLGE), and 132-163 (LSQR…MMSR). Residues aspartate 34, aspartate 36, aspartate 38, tyrosine 40, and glutamate 45 each coordinate Ca(2+). Ca(2+) is bound by residues aspartate 108, asparagine 110, aspartate 112, cysteine 114, glutamate 119, aspartate 145, asparagine 147, aspartate 149, and glutamate 156.

It is found in the cytoplasm. The protein localises to the perinuclear region. Its subcellular location is the cell membrane. The protein resides in the golgi apparatus. In terms of biological role, required for sound encoding at inner hair cells (IHCs) synapses, likely via inhibition of the inactivation of voltage-gated calcium channel of type 1.3 (Cav1.3) in the IHCs. Required for the normal transfer of light signals through the retina. The chain is Calcium-binding protein 2 (CABP2) from Bos taurus (Bovine).